The following is a 598-amino-acid chain: Kinetochore-associated protein KNL-2 homolog (598 aa).

In terms of domain architecture, SANTA spans 19–111 (VVLRDWWLIK…IFGFPPCWER (93 aa)). Composition is skewed to basic and acidic residues over residues 335–344 (AKSSKPEKKG) and 371–381 (KSAENKRKIDA). 4 disordered regions span residues 335 to 403 (AKSS…NNAK), 445 to 500 (KESL…EEAE), 520 to 542 (PEKK…QKRS), and 572 to 598 (KDGS…LKIK). A compositionally biased stretch (polar residues) spans 383 to 392 (KLQSPTSNVA). Residues 527 to 539 (QKTNAASTDSLGQ) show a composition bias toward polar residues. The segment at 538–572 (GQKRSRSGRVLVSSLEFWRNQIPVYDMDRNLIQVK) is required for localization at centromeres.

This sequence belongs to the KNL2 family. In terms of tissue distribution, expressed in shoot apical meristem, leaf primordia, basal parts of emerging leaves, inflorescence meristems, young inflorescences, developing flower buds, developing sepals and pistils, styles and young siliques.

The protein localises to the nucleus. Its subcellular location is the nucleoplasm. It is found in the nuclear body. The protein resides in the nucleolus. It localises to the chromosome. The protein localises to the centromere. Its function is as follows. Involved in recognition of centromeres and centromeric localization of the centromere-specific histone CENH3. Required for normal progression of mitosis and meiosis. May play a role in the determination of the epigenetic status of centromeres. Binds DNA and RNA in vitro. This is Kinetochore-associated protein KNL-2 homolog from Arabidopsis thaliana (Mouse-ear cress).